A 138-amino-acid chain; its full sequence is Small ribosomal subunit protein uS11c (138 aa).

A disordered region spans residues 1 to 23; sequence MAKPIPRIGSRRNGRIGSRKSAR. Basic residues predominate over residues 9-23; the sequence is GSRRNGRIGSRKSAR.

The protein belongs to the universal ribosomal protein uS11 family. In terms of assembly, part of the 30S ribosomal subunit.

The protein resides in the plastid. It localises to the chloroplast. The chain is Small ribosomal subunit protein uS11c from Vitis vinifera (Grape).